Here is a 380-residue protein sequence, read N- to C-terminus: Kappa-type opioid receptor (380 aa).

The Extracellular portion of the chain corresponds to 1–57 (MESPIQIFRGEPGPTCAPSACLLPNSSSWFPNWAESDSNGSVGSEDQQLEPAHISPA). Residues Asn-25 and Asn-39 are each glycosylated (N-linked (GlcNAc...) asparagine). A helical membrane pass occupies residues 58–85 (IPVIITAVYSVVFVVGLVGNSLVMFVII). The Cytoplasmic portion of the chain corresponds to 86–95 (RYTKMKTATN). A helical transmembrane segment spans residues 96-119 (IYIFNLALADALVTTTMPFQSAVY). Topologically, residues 120 to 132 (LMNSWPFGDVLCK) are extracellular. The cysteines at positions 131 and 210 are disulfide-linked. The helical transmembrane segment at 133 to 154 (IVISIDYYNMFTSIFTLTMMSV) threads the bilayer. Topologically, residues 155-173 (DRYIAVCHPVKALDFRTPL) are cytoplasmic. The helical transmembrane segment at 174 to 196 (KAKIINICIWLLASSVGISAIVL) threads the bilayer. Over 197–222 (GGTKVREDVDVIECSLQFPDDEYSWW) the chain is Extracellular. A helical membrane pass occupies residues 223 to 247 (DLFMKICVFVFAFVIPVLIIIVCYT). Residues 248–274 (LMILRLKSVRLLSGSREKDRNLRRITK) are Cytoplasmic-facing. The chain crosses the membrane as a helical span at residues 275–296 (LVLVVVAVFIICWTPIHIFILV). Residues 297 to 311 (EALGSTSHSTAVLSS) lie on the Extracellular side of the membrane. Residues 312-333 (YYFCIALGYTNSSLNPVLYAFL) traverse the membrane as a helical segment. Over 334-380 (DENFKRCFRDFCFPIKMRMERQSTNRVRNTVQDPASMRDVGGMNKPV) the chain is Cytoplasmic. Cys-345 is lipidated: S-palmitoyl cysteine.

The protein belongs to the G-protein coupled receptor 1 family. Interacts with NHERF1. Interacts with GABARAPL1.

Its subcellular location is the cell membrane. Its function is as follows. G-protein coupled opioid receptor that functions as a receptor for endogenous alpha-neoendorphins and dynorphins, but has low affinity for beta-endorphins. Also functions as a receptor for various synthetic opioids and for the psychoactive diterpene salvinorin A. Ligand binding causes a conformation change that triggers signaling via guanine nucleotide-binding proteins (G proteins) and modulates the activity of down-stream effectors, such as adenylate cyclase. Signaling leads to the inhibition of adenylate cyclase activity. Inhibits neurotransmitter release by reducing calcium ion currents and increasing potassium ion conductance. Plays a role in the perception of pain. Plays a role in mediating reduced physical activity upon treatment with synthetic opioids. Plays a role in the regulation of salivation in response to synthetic opioids. May play a role in arousal and regulation of autonomic and neuroendocrine functions. This chain is Kappa-type opioid receptor (Oprk1), found in Rattus norvegicus (Rat).